The primary structure comprises 309 residues: Glutaminase (309 aa).

Residues Ser64, Asn114, Glu160, Asn167, Tyr191, Tyr243, and Val261 each contribute to the substrate site.

Belongs to the glutaminase family. Homotetramer.

It carries out the reaction L-glutamine + H2O = L-glutamate + NH4(+). The chain is Glutaminase from Methylobacterium nodulans (strain LMG 21967 / CNCM I-2342 / ORS 2060).